The following is a 26-amino-acid chain: Peroxidase 1 (26 aa).

Asp15 contacts Ca(2+).

Belongs to the peroxidase family. Classical plant (class III) peroxidase subfamily. It depends on heme b as a cofactor. Ca(2+) is required as a cofactor.

It localises to the secreted. The enzyme catalyses 2 a phenolic donor + H2O2 = 2 a phenolic radical donor + 2 H2O. Removal of H(2)O(2), oxidation of toxic reductants, biosynthesis and degradation of lignin, suberization, auxin catabolism, response to environmental stresses such as wounding, pathogen attack and oxidative stress. These functions might be dependent on each isozyme/isoform in each plant tissue. This chain is Peroxidase 1, found in Vitis vinifera (Grape).